Here is a 147-residue protein sequence, read N- to C-terminus: Signal peptidase complex subunit 3 (147 aa).

The Cytoplasmic segment spans residues 1 to 6 (MHSWVQ). A helical; Signal-anchor for type II membrane protein membrane pass occupies residues 7–29 (RLLTTATTAALLLLAACCAASAL). Topologically, residues 30–147 (DAFHVPSVQA…EFNLPDSYTS (118 aa)) are lumenal.

This sequence belongs to the SPCS3 family. Component of the signal peptidase complex (SPC) composed of a catalytic subunit SEC11 and three accessory subunits SPCS1, SPCS2 and SPCS3. The complex induces a local thinning of the ER membrane which is used to measure the length of the signal peptide (SP) h-region of protein substrates. This ensures the selectivity of the complex towards h-regions shorter than 18-20 amino acids.

It is found in the endoplasmic reticulum membrane. Functionally, essential component of the signal peptidase complex (SPC) which catalyzes the cleavage of N-terminal signal sequences from nascent proteins as they are translocated into the lumen of the endoplasmic reticulum. Essential for the SPC catalytic activity, possibly by stabilizing and positioning the active center of the complex close to the lumenal surface. The polypeptide is Signal peptidase complex subunit 3 (Oryza sativa subsp. japonica (Rice)).